The sequence spans 748 residues: Putative transmembrane protein ORF88 (748 aa).

The first 20 residues, 1–20 (MIIMKSIILLLAWFLTKTQA), serve as a signal peptide directing secretion. Over 21-723 (NMLTESLYLS…LNLAPFKTLS (703 aa)) the chain is Extracellular. N-linked (GlcNAc...) asparagine; by host glycosylation is found at asparagine 55, asparagine 78, asparagine 99, asparagine 152, asparagine 189, asparagine 390, asparagine 467, and asparagine 499. The interval 531 to 574 (LTFDSPPPPPTTTQAPPPPPTTTQAPPPPPTTTQAPPPPIVINT) is disordered. Pro residues predominate over residues 535 to 570 (SPPPPPTTTQAPPPPPTTTQAPPPPPTTTQAPPPPI). Asparagine 573, asparagine 584, asparagine 599, asparagine 612, and asparagine 617 each carry an N-linked (GlcNAc...) asparagine; by host glycan. The interval 650–680 (PSIGRAPIPPPDVPVEPPRSIPTTNAPSPEE) is disordered. Positions 656–669 (PIPPPDVPVEPPRS) are enriched in pro residues. Residues 724–744 (YAGIGVVSFALLFTILVVCLI) form a helical membrane-spanning segment. At 745–748 (KFSI) the chain is on the cytoplasmic side.

The protein resides in the host membrane. The sequence is that of Putative transmembrane protein ORF88 from Magallana gigas (Pacific oyster).